The following is a 459-amino-acid chain: Ribulose bisphosphate carboxylase large chain (459 aa).

Lysine 4 carries the N6,N6,N6-trimethyllysine modification. Substrate is bound by residues asparagine 113 and threonine 163. The Proton acceptor role is filled by lysine 165. Lysine 167 provides a ligand contact to substrate. The Mg(2+) site is built by lysine 191, aspartate 193, and glutamate 194. An N6-carboxylysine modification is found at lysine 191. Histidine 284 acts as the Proton acceptor in catalysis. Positions 285, 317, and 369 each coordinate substrate.

Belongs to the RuBisCO large chain family. Type I subfamily. As to quaternary structure, heterohexadecamer of 8 large chains and 8 small chains; disulfide-linked. The disulfide link is formed within the large subunit homodimers. The cofactor is Mg(2+). In terms of processing, the disulfide bond which can form in the large chain dimeric partners within the hexadecamer appears to be associated with oxidative stress and protein turnover.

It localises to the plastid. Its subcellular location is the chloroplast. It catalyses the reaction 2 (2R)-3-phosphoglycerate + 2 H(+) = D-ribulose 1,5-bisphosphate + CO2 + H2O. It carries out the reaction D-ribulose 1,5-bisphosphate + O2 = 2-phosphoglycolate + (2R)-3-phosphoglycerate + 2 H(+). Its function is as follows. RuBisCO catalyzes two reactions: the carboxylation of D-ribulose 1,5-bisphosphate, the primary event in carbon dioxide fixation, as well as the oxidative fragmentation of the pentose substrate in the photorespiration process. Both reactions occur simultaneously and in competition at the same active site. This chain is Ribulose bisphosphate carboxylase large chain, found in Nyssa ogeche (Ogeechee tupelo).